A 144-amino-acid polypeptide reads, in one-letter code: Large ribosomal subunit protein uL15 (144 aa).

Over residues 1–14 (MKLHELKPNEGARD) the composition is skewed to basic and acidic residues. The disordered stretch occupies residues 1–43 (MKLHELKPNEGARDVRKRVGRGTSSGTGKTAGRGQKGQKARSK). A compositionally biased stretch (gly residues) spans 23 to 35 (TSSGTGKTAGRGQ).

This sequence belongs to the universal ribosomal protein uL15 family. In terms of assembly, part of the 50S ribosomal subunit.

Binds to the 23S rRNA. This is Large ribosomal subunit protein uL15 from Latilactobacillus sakei subsp. sakei (strain 23K) (Lactobacillus sakei subsp. sakei).